Consider the following 139-residue polypeptide: Antitoxin HicB 2 (139 aa).

The region spanning 87 to 137 is the HTH cro/C1-type domain; the sequence is MLQTRTSNAELARLLGTRPQEIQRIVSLSHSTKIDTIANALNALGKHLELV. The segment at residues 96-113 is a DNA-binding region (H-T-H motif); it reads ELARLLGTRPQEIQRIVS.

The protein belongs to the HicB antitoxin family. Probably forms a complex with the probable mRNA interferase HicA2 (its cognate toxin); when complexed with HicA inhibits the toxin activity.

Functionally, antitoxin component of a type II toxin-antitoxin (TA) system. Functions as an mRNA interferase antitoxin preventing effects of the HicA 2 toxin. This chain is Antitoxin HicB 2 (hicB2), found in Photorhabdus laumondii subsp. laumondii (strain DSM 15139 / CIP 105565 / TT01) (Photorhabdus luminescens subsp. laumondii).